A 464-amino-acid polypeptide reads, in one-letter code: 3-deoxy-D-manno-octulosonic acid transferase (464 aa).

The helical; Signal-anchor transmembrane segment at 2 to 22 (MLLYYALSFILLPVYFIIILI) threads the bilayer. In terms of domain architecture, RPE1 insert spans 47–93 (DSLDFMQTSANKEEFKGDTSLRTTTYTLIREDEGLGSTYKLPLEASD). E107 functions as the Proton acceptor in the catalytic mechanism. CMP contacts are provided by residues 311–312 (PR), 352–354 (FGE), and 377–380 (NILE).

The protein belongs to the glycosyltransferase group 1 family. Glycosyltransferase 30 subfamily.

The protein resides in the cell inner membrane. It catalyses the reaction lipid IVA (E. coli) + CMP-3-deoxy-beta-D-manno-octulosonate = alpha-Kdo-(2-&gt;6)-lipid IVA (E. coli) + CMP + H(+). The protein operates within bacterial outer membrane biogenesis; LPS core biosynthesis. In terms of biological role, involved in lipopolysaccharide (LPS) biosynthesis. Catalyzes the transfer of 3-deoxy-D-manno-octulosonate (Kdo) residue(s) from CMP-Kdo to lipid IV(A), the tetraacyldisaccharide-1,4'-bisphosphate precursor of lipid A. This Rickettsia conorii (strain ATCC VR-613 / Malish 7) protein is 3-deoxy-D-manno-octulosonic acid transferase (waaA).